The sequence spans 73 residues: Acyl carrier protein homolog (73 aa).

In terms of domain architecture, Carrier spans 1–72 (MAIKEWIITQ…DIIVLIEQKS (72 aa)). S32 carries the O-(pantetheine 4'-phosphoryl)serine modification.

4'-phosphopantetheine is transferred from CoA to a specific serine of the apo-ACP-like protein.

The protein operates within lipid metabolism; fatty acid biosynthesis. Functionally, carrier of the growing fatty acid chain in fatty acid biosynthesis. This chain is Acyl carrier protein homolog, found in Mycoplasmopsis pulmonis (strain UAB CTIP) (Mycoplasma pulmonis).